The chain runs to 104 residues: uncharacterized protein (104 aa).

The first 25 residues, 1–25 (MVSSFFMASTLLAISSCFNSSISRA), serve as a signal peptide directing secretion. The chain crosses the membrane as a helical span at residues 79–99 (IPVVIVVEISSTLVLLLSAFL).

The protein localises to the membrane. This is an uncharacterized protein from Saccharomyces cerevisiae (strain ATCC 204508 / S288c) (Baker's yeast).